Here is a 376-residue protein sequence, read N- to C-terminus: Queuine tRNA-ribosyltransferase (376 aa).

The active-site Proton acceptor is the D89. Substrate is bound by residues D89–F93, D143, Q194, and G221. The interval G252 to N258 is RNA binding. The Nucleophile role is filled by D271. The interval A276–R280 is RNA binding; important for wobble base 34 recognition. The Zn(2+) site is built by C309, C311, C314, and H340.

It belongs to the queuine tRNA-ribosyltransferase family. Homodimer. Within each dimer, one monomer is responsible for RNA recognition and catalysis, while the other monomer binds to the replacement base PreQ1. The cofactor is Zn(2+).

It carries out the reaction 7-aminomethyl-7-carbaguanine + guanosine(34) in tRNA = 7-aminomethyl-7-carbaguanosine(34) in tRNA + guanine. Its pathway is tRNA modification; tRNA-queuosine biosynthesis. Its function is as follows. Catalyzes the base-exchange of a guanine (G) residue with the queuine precursor 7-aminomethyl-7-deazaguanine (PreQ1) at position 34 (anticodon wobble position) in tRNAs with GU(N) anticodons (tRNA-Asp, -Asn, -His and -Tyr). Catalysis occurs through a double-displacement mechanism. The nucleophile active site attacks the C1' of nucleotide 34 to detach the guanine base from the RNA, forming a covalent enzyme-RNA intermediate. The proton acceptor active site deprotonates the incoming PreQ1, allowing a nucleophilic attack on the C1' of the ribose to form the product. After dissociation, two additional enzymatic reactions on the tRNA convert PreQ1 to queuine (Q), resulting in the hypermodified nucleoside queuosine (7-(((4,5-cis-dihydroxy-2-cyclopenten-1-yl)amino)methyl)-7-deazaguanosine). The chain is Queuine tRNA-ribosyltransferase from Clostridium botulinum (strain Kyoto / Type A2).